Here is a 360-residue protein sequence, read N- to C-terminus: ASTRA-associated protein 1 (360 aa).

WD repeat units follow at residues 9 to 46 (AHAA…PAAR), 49 to 86 (AHEG…NSKG), 167 to 205 (RGEG…CRML), and 317 to 357 (PEQS…ENGL).

The protein belongs to the WD repeat ASA1 family. As to quaternary structure, component of the ASTRA chromatin remodeling machinery complex.

Its subcellular location is the nucleus. In terms of biological role, component of the ASTRA complex involved in chromatin remodeling. This is ASTRA-associated protein 1 (ASA1) from Clavispora lusitaniae (strain ATCC 42720) (Yeast).